Here is a 37-residue protein sequence, read N- to C-terminus: Large ribosomal subunit protein bL36 (37 aa).

The protein belongs to the bacterial ribosomal protein bL36 family.

The sequence is that of Large ribosomal subunit protein bL36 from Trichodesmium erythraeum (strain IMS101).